Here is a 775-residue protein sequence, read N- to C-terminus: MTNTILDTYSSRRKPRRIGILTSGGDAPGMNGAIRAVVRTAIQNGCEAWAIHEGYEGLIQGGAMMHPLYWEDVRGFLSRGGTLIGSVRCDRFREREGRLQAARNMVLFGIDALVVCGGDGSLTGADLFRSEWPELLNELVSTGVLTVAQVAPHQNLNIVGLLGSIDNDFSGTDATIGCYSALTRICEAVDAVFDTASSHRRGFVVEVMGRHCGWLALMAAIATGADWLFIPERPPRDGWEDDMCSIITKNRNRGKRRTIVILAEGAQDSNLDRISSSAVKDVLSKRLGLDTRVTVLGHIQRGGSPCAYDRWLSTLQGIHAVKAVLSMTPESPSPVVIIQENRIRTSSLAETVALTKEANASMHAKEFEKAATLRDPEFMEYHSAYRHLNTSDHPKMVLPEDKRMRVAIIHVGAPAAGMNPATRAVVAYCLTRGHTPIAIHNGFPGLCRHHDDTPGSVREMHWLESGDWINDGGSDIGTNAGLPLDDIETTAQCFERYKFDALFVIGGFEAFTAVSQLRKARKQYLAFRIPLVLLPASMSNNVPGTEYSLGSDTSLNTLVYFCDVVRQSASSSGHSVFVVEAQGAEYQATAAALAAGAMTVYTPERGITLQSLSNDIEYLRQQFSKDHGANRSGKLIIRNDQTSTIYSTTEIANIIKHEAKNRFDAQGVVPGHFQQGGKVSPIDRIRAFRLAVKCMEHLETFAGQSPEEIMNDENSATVISIKQSRILLLPMGGPTGVEATDTDWKRQRPKTQNWLEIQEAVDSLSGRSSLYAIPN.

Residues 1 to 390 (MTNTILDTYS…YHSAYRHLNT (390 aa)) form an N-terminal catalytic PFK domain 1 region. ATP is bound by residues Gly25, 88-89 (RC), and 118-121 (GDGS). Asp119 is a binding site for Mg(2+). Residues 164–166 (SID), Arg201, 208–210 (MGR), Glu264, Arg292, and 298–301 (HIQR) contribute to the substrate site. The active-site Proton acceptor is Asp166. Residues 391–404 (SDHPKMVLPEDKRM) form an interdomain linker region. The interval 405 to 775 (RVAIIHVGAP…GRSSLYAIPN (371 aa)) is C-terminal regulatory PFK domain 2. Beta-D-fructose 2,6-bisphosphate is bound by residues 537-541 (SMSNN), 582-584 (QGA), Asp640, and 672-675 (HFQQ).

It belongs to the phosphofructokinase type A (PFKA) family. ATP-dependent PFK group I subfamily. Eukaryotic two domain clade 'E' sub-subfamily. As to quaternary structure, homotetramer. Mg(2+) serves as cofactor.

The protein resides in the cytoplasm. It catalyses the reaction beta-D-fructose 6-phosphate + ATP = beta-D-fructose 1,6-bisphosphate + ADP + H(+). It participates in carbohydrate degradation; glycolysis; D-glyceraldehyde 3-phosphate and glycerone phosphate from D-glucose: step 3/4. Allosterically activated by ADP, AMP, or fructose 2,6-bisphosphate, and allosterically inhibited by ATP or citrate. Catalyzes the phosphorylation of D-fructose 6-phosphate to fructose 1,6-bisphosphate by ATP, the first committing step of glycolysis. The protein is ATP-dependent 6-phosphofructokinase 2 (pfkB) of Aspergillus oryzae (strain ATCC 42149 / RIB 40) (Yellow koji mold).